The following is a 216-amino-acid chain: Kynurenine formamidase (216 aa).

W25 is a binding site for substrate. Zn(2+) is bound by residues H55, H59, and D61. Residue H65 is the Proton donor/acceptor of the active site. Zn(2+) is bound by residues H167 and E179.

It belongs to the Cyclase 1 superfamily. KynB family. As to quaternary structure, homodimer. It depends on Zn(2+) as a cofactor.

It catalyses the reaction N-formyl-L-kynurenine + H2O = L-kynurenine + formate + H(+). It participates in amino-acid degradation; L-tryptophan degradation via kynurenine pathway; L-kynurenine from L-tryptophan: step 2/2. Its function is as follows. Catalyzes the hydrolysis of N-formyl-L-kynurenine to L-kynurenine, the second step in the kynurenine pathway of tryptophan degradation. In Cupriavidus taiwanensis (strain DSM 17343 / BCRC 17206 / CCUG 44338 / CIP 107171 / LMG 19424 / R1) (Ralstonia taiwanensis (strain LMG 19424)), this protein is Kynurenine formamidase.